Consider the following 231-residue polypeptide: ATP phosphoribosyltransferase (231 aa).

Belongs to the ATP phosphoribosyltransferase family. Short subfamily. As to quaternary structure, heteromultimer composed of HisG and HisZ subunits.

It is found in the cytoplasm. It catalyses the reaction 1-(5-phospho-beta-D-ribosyl)-ATP + diphosphate = 5-phospho-alpha-D-ribose 1-diphosphate + ATP. The protein operates within amino-acid biosynthesis; L-histidine biosynthesis; L-histidine from 5-phospho-alpha-D-ribose 1-diphosphate: step 1/9. Catalyzes the condensation of ATP and 5-phosphoribose 1-diphosphate to form N'-(5'-phosphoribosyl)-ATP (PR-ATP). Has a crucial role in the pathway because the rate of histidine biosynthesis seems to be controlled primarily by regulation of HisG enzymatic activity. This is ATP phosphoribosyltransferase (hisG) from Sinorhizobium fredii (strain NBRC 101917 / NGR234).